A 115-amino-acid chain; its full sequence is Large ribosomal subunit protein bL20 (115 aa).

It belongs to the bacterial ribosomal protein bL20 family.

Its function is as follows. Binds directly to 23S ribosomal RNA and is necessary for the in vitro assembly process of the 50S ribosomal subunit. It is not involved in the protein synthesizing functions of that subunit. This chain is Large ribosomal subunit protein bL20, found in Borrelia garinii subsp. bavariensis (strain ATCC BAA-2496 / DSM 23469 / PBi) (Borreliella bavariensis).